A 448-amino-acid polypeptide reads, in one-letter code: Tubulin beta chain (448 aa).

The GTP site is built by Gln-11, Glu-69, Ser-138, Gly-142, Thr-143, Gly-144, Asn-204, and Asn-226. Glu-69 contacts Mg(2+). The disordered stretch occupies residues 429 to 448; it reads GIDEGDEDYEIEEEKEPLEY.

Belongs to the tubulin family. In terms of assembly, dimer of alpha and beta chains. A typical microtubule is a hollow water-filled tube with an outer diameter of 25 nm and an inner diameter of 15 nM. Alpha-beta heterodimers associate head-to-tail to form protofilaments running lengthwise along the microtubule wall with the beta-tubulin subunit facing the microtubule plus end conferring a structural polarity. Microtubules usually have 13 protofilaments but different protofilament numbers can be found in some organisms and specialized cells. The cofactor is Mg(2+).

Its subcellular location is the cytoplasm. It is found in the cytoskeleton. Its function is as follows. Tubulin is the major constituent of microtubules, a cylinder consisting of laterally associated linear protofilaments composed of alpha- and beta-tubulin heterodimers. Microtubules grow by the addition of GTP-tubulin dimers to the microtubule end, where a stabilizing cap forms. Below the cap, tubulin dimers are in GDP-bound state, owing to GTPase activity of alpha-tubulin. The sequence is that of Tubulin beta chain (nda3) from Schizosaccharomyces pombe (strain 972 / ATCC 24843) (Fission yeast).